We begin with the raw amino-acid sequence, 575 residues long: U3 small nucleolar RNA-associated protein 9 (575 aa).

2 stretches are compositionally biased toward basic and acidic residues: residues 340–355 (NEKN…KLEE) and 364–375 (VQHEKKETETKI). The tract at residues 340-375 (NEKNNADEADQKKLEEKEEEAQPEVQHEKKETETKI) is disordered. Residues S547 and S564 each carry the phosphoserine modification.

In terms of assembly, interacts with snoRNA U3. Interacts with MPP10. Component of the ribosomal small subunit (SSU) processome composed of at least 40 protein subunits and snoRNA U3. In the absence of snoRNA3, forms a complex with other t-UTPs. This complex can associate with pre-18S ribosomal RNAs.

It localises to the nucleus. It is found in the nucleolus. Involved in nucleolar processing of pre-18S ribosomal RNA. Required for optimal pre-ribosomal RNA transcription by RNA polymerase I together with a subset of U3 proteins required for transcription (t-UTPs). The sequence is that of U3 small nucleolar RNA-associated protein 9 (UTP9) from Saccharomyces cerevisiae (strain ATCC 204508 / S288c) (Baker's yeast).